The primary structure comprises 129 residues: MATRKTSRKRRVKKNIEAGVAHIHATFNNTLVMITDVQGNAIAWSSAGALGFKGSRKSTPFAAQMAAEAAAKASQEHGIKSVEVAVKGPGSGRESAIRAIQAAGIEITAIRDVTPVPHNGTRPPKRRRV.

It belongs to the universal ribosomal protein uS11 family. As to quaternary structure, part of the 30S ribosomal subunit. Interacts with proteins S7 and S18. Binds to IF-3.

Its function is as follows. Located on the platform of the 30S subunit, it bridges several disparate RNA helices of the 16S rRNA. Forms part of the Shine-Dalgarno cleft in the 70S ribosome. This Levilactobacillus brevis (strain ATCC 367 / BCRC 12310 / CIP 105137 / JCM 1170 / LMG 11437 / NCIMB 947 / NCTC 947) (Lactobacillus brevis) protein is Small ribosomal subunit protein uS11.